Consider the following 539-residue polypeptide: NADH-quinone oxidoreductase subunit N 2 (539 aa).

The next 13 membrane-spanning stretches (helical) occupy residues 11–31 (LIPE…DVLT), 52–72 (LMGL…FSWM), 106–126 (PLTH…VILT), 141–161 (LILF…LIMI), 193–213 (YIFG…LLGL), 248–268 (GVAI…VAIV), 296–316 (AGFF…SILG), 329–349 (WTSL…LAAL), 357–377 (MLAY…VGTQ), 385–405 (LMYL…LALV), 429–449 (LLLT…GFFV), 462–484 (AKWL…LRFL), and 500–520 (VGFG…GLGI).

It belongs to the complex I subunit 2 family. NDH-1 is composed of 14 different subunits. Subunits NuoA, H, J, K, L, M, N constitute the membrane sector of the complex.

The protein resides in the cell membrane. The enzyme catalyses a quinone + NADH + 5 H(+)(in) = a quinol + NAD(+) + 4 H(+)(out). Functionally, NDH-1 shuttles electrons from NADH, via FMN and iron-sulfur (Fe-S) centers, to quinones in the respiratory chain. The immediate electron acceptor for the enzyme in this species is believed to be ubiquinone. Couples the redox reaction to proton translocation (for every two electrons transferred, four hydrogen ions are translocated across the cytoplasmic membrane), and thus conserves the redox energy in a proton gradient. In Herpetosiphon aurantiacus (strain ATCC 23779 / DSM 785 / 114-95), this protein is NADH-quinone oxidoreductase subunit N 2.